Consider the following 93-residue polypeptide: DNA/RNA-binding protein Alba (93 aa).

K11 carries the N6-acetyllysine modification.

It belongs to the histone-like Alba family. Acetylated. Acetylation at Lys-11 decreases DNA-binding affinity.

Its subcellular location is the cytoplasm. It localises to the chromosome. Functionally, binds double-stranded DNA tightly but without sequence specificity. Involved in DNA compaction. The polypeptide is DNA/RNA-binding protein Alba (Pyrococcus furiosus (strain ATCC 43587 / DSM 3638 / JCM 8422 / Vc1)).